The following is a 239-amino-acid chain: Interleukin-27 subunit alpha (239 aa).

An N-terminal signal peptide occupies residues 1 to 28 (MGQMADDLGWRLSLLLLSLLLARAGVWG). Residue Asn-89 is glycosylated (N-linked (GlcNAc...) asparagine). Residues 167 to 186 (EEENEAGRELLPGAPGGPSK) are disordered.

This sequence belongs to the IL-6 superfamily. In terms of assembly, heterodimer with EBI3; not disulfide-linked. This heterodimer is known as interleukin IL-27. Post-translationally, O-glycosylated.

The protein resides in the secreted. Functionally, associates with EBI3 to form the IL-27 interleukin, a heterodimeric cytokine which functions in innate immunity. Cytokine with pro- and anti-inflammatory properties, that can regulate T-helper cell development, suppress T-cell proliferation, stimulate cytotoxic T-cell activity, induce isotype switching in B-cells, and that has diverse effects on innate immune cells. Among its target cells are CD4 T-helper cells which can differentiate in type 1 effector cells (TH1), type 2 effector cells (TH2) and IL17 producing helper T-cells (TH17). It drives rapid clonal expansion of naive but not memory CD4 T-cells. It also strongly synergizes with IL-12 to trigger interferon-gamma/IFN-gamma production of naive CD4 T-cells, binds to the cytokine receptor WSX-1/TCCR which appears to be required but not sufficient for IL-27-mediated signal transduction. IL-27 potentiate the early phase of TH1 response and suppress TH2 and TH17 differentiation. It induces the differentiation of TH1 cells via two distinct pathways, p38 MAPK/TBX21- and ICAM1/ITGAL/ERK-dependent pathways. It also induces STAT1, STAT3, STAT4 and STAT5 phosphorylation and activates TBX21/T-Bet via STAT1 with resulting IL12RB2 up-regulation, an event crucial to TH1 cell commitment. It suppresses the expression of GATA3, the inhibitor TH1 cells development. In CD8 T-cells, it activates STATs as well as GZMB. IL-27 reveals to be a potent inhibitor of TH17 cell development and of IL-17 production. Indeed IL27 alone is also able to inhibit the production of IL17 by CD4 and CD8 T-cells. While IL-27 suppressed the development of pro-inflammatory Th17 cells via STAT1, it inhibits the development of anti-inflammatory inducible regulatory T-cells, iTreg, independently of STAT1. IL-27 also has an effect on cytokine production, it suppresses pro-inflammatory cytokine production such as IL2, IL4, IL5 and IL6 and activates suppressors of cytokine signaling such as SOCS1 and SOCS3. Apart from suppression of cytokine production, IL-27 also antagonizes the effects of some cytokines such as IL6 through direct effects on T-cells. Another important role of IL-27 is its antitumor activity as well as its antiangiogenic activity with activation of production of antiangiogenic chemokines such as IP-10/CXCL10 and MIG/CXCL9. In vein endothelial cells, it induces IRF1/interferon regulatory factor 1 and increase the expression of MHC class II transactivator/CIITA with resulting up-regulation of major histocompatibility complex class II. The polypeptide is Interleukin-27 subunit alpha (IL27) (Sus scrofa (Pig)).